The sequence spans 604 residues: Aspartate--tRNA(Asp/Asn) ligase (604 aa).

L-aspartate is bound at residue glutamate 174. An aspartate region spans residues 198-201; sequence QLYK. Arginine 220 contacts L-aspartate. ATP-binding positions include 220 to 222 and glutamine 229; that span reads RDE. Histidine 460 is a binding site for L-aspartate. An ATP-binding site is contributed by glutamate 494. Arginine 501 lines the L-aspartate pocket. An ATP-binding site is contributed by 546 to 549; it reads GLDR.

This sequence belongs to the class-II aminoacyl-tRNA synthetase family. Type 1 subfamily. Homodimer.

Its subcellular location is the cytoplasm. The enzyme catalyses tRNA(Asx) + L-aspartate + ATP = L-aspartyl-tRNA(Asx) + AMP + diphosphate. In terms of biological role, aspartyl-tRNA synthetase with relaxed tRNA specificity since it is able to aspartylate not only its cognate tRNA(Asp) but also tRNA(Asn). Reaction proceeds in two steps: L-aspartate is first activated by ATP to form Asp-AMP and then transferred to the acceptor end of tRNA(Asp/Asn). This chain is Aspartate--tRNA(Asp/Asn) ligase, found in Paracidovorax citrulli (strain AAC00-1) (Acidovorax citrulli).